Reading from the N-terminus, the 920-residue chain is Translation initiation factor IF-2 (920 aa).

The tract at residues 33-305 is disordered; that stretch reads KSASSTVEAP…RGRKSKRAKR (273 aa). Over residues 53 to 86 the composition is skewed to low complexity; it reads SKSAPAPAKSAGNGATAAPATSATPATAAAAAAP. 3 stretches are compositionally biased toward pro residues: residues 87–159, 179–193, and 201–212; these read APAP…PAPR, PRPQ…PGTP, and NMPPRPAGPRPG. Over residues 225–291 the composition is skewed to gly residues; sequence PGGRGPGGGG…GAAGAFGRPG (67 aa). Residues 295 to 304 are compositionally biased toward basic residues; that stretch reads KRGRKSKRAK. In terms of domain architecture, tr-type G spans 416–588; that stretch reads IRPPVVTVMG…VLLTADASLD (173 aa). The segment at 425–432 is G1; it reads GHVDHGKT. 425 to 432 provides a ligand contact to GTP; it reads GHVDHGKT. The tract at residues 450 to 454 is G2; that stretch reads GITQH. The G3 stretch occupies residues 475 to 478; the sequence is DTPG. GTP-binding positions include 475–479 and 529–532; these read DTPGH and NKID. The segment at 529–532 is G4; that stretch reads NKID. A G5 region spans residues 565-567; sequence SAK.

Belongs to the TRAFAC class translation factor GTPase superfamily. Classic translation factor GTPase family. IF-2 subfamily.

The protein resides in the cytoplasm. One of the essential components for the initiation of protein synthesis. Protects formylmethionyl-tRNA from spontaneous hydrolysis and promotes its binding to the 30S ribosomal subunits. Also involved in the hydrolysis of GTP during the formation of the 70S ribosomal complex. This Mycobacterium sp. (strain JLS) protein is Translation initiation factor IF-2.